Here is a 296-residue protein sequence, read N- to C-terminus: Zinc finger protein 75A (296 aa).

Positions 1–66 (MYFSQEEWEL…VSPEFKDSAG (66 aa)) constitute a KRAB domain. 5 C2H2-type zinc fingers span residues 161–183 (FKCQ…QRIH), 189–211 (YKCQ…LTTH), 217–239 (YKCS…QRTH), 245–267 (FTCH…RRTH), and 273–295 (YTCS…QKLH).

It belongs to the krueppel C2H2-type zinc-finger protein family.

It is found in the nucleus. May be involved in transcriptional regulation. The protein is Zinc finger protein 75A (ZNF75A) of Homo sapiens (Human).